Here is a 454-residue protein sequence, read N- to C-terminus: Natural cytotoxicity triggering receptor 3 ligand 1 (454 aa).

Positions 1–24 are cleaved as a signal peptide; the sequence is MTWRAAASTCAALLILLWALTTEG. Over 25-262 the chain is Extracellular; that stretch reads DLKVEMMAGG…SETEKTDNFS (238 aa). The 112-residue stretch at 27-138 folds into the Ig-like V-type domain; it reads KVEMMAGGTQ…LKAQGTVQLE (112 aa). N-linked (GlcNAc...) asparagine glycans are attached at residues asparagine 43 and asparagine 57. Residues cysteine 48 and cysteine 122 are joined by a disulfide bond. Interaction with NCR3 regions lie at residues 59–62 and 127–130; these read TSMG and TPLK. Residues 143–244 form the Ig-like C1-type domain; it reads PASRLLLDQV…LHTPLRSNFT (102 aa). An intrachain disulfide couples cysteine 163 to cysteine 228. N-linked (GlcNAc...) asparagine glycans are attached at residues asparagine 174, asparagine 208, asparagine 216, asparagine 242, and asparagine 260. Residues 263–283 traverse the membrane as a helical segment; it reads IHWWPISFIGVGLVLLIVLIP. The Cytoplasmic segment spans residues 284–454; sequence WKKICNKSSS…QPPTLLLPLQ (171 aa). Positions 291–429 are retroviral-Gag-like; the sequence is SSSAYTPLKC…APILPVSPIW (139 aa). The interval 395 to 454 is disordered; the sequence is GKSIDDNSTKSEKQTPREHSDAVPDAPILPVSPIWEPPPATTSTTPVLSSQPPTLLLPLQ. A compositionally biased stretch (basic and acidic residues) spans 397–416; it reads SIDDNSTKSEKQTPREHSDA. Residues 435–454 show a composition bias toward low complexity; sequence TTSTTPVLSSQPPTLLLPLQ.

In terms of assembly, monomer. Interacts specifically with NCR3, but not with other natural killer cell-activating receptors, including NCR1, NCR2 and KLRK1. As to expression, not detected in any normal tissue tested. Expressed at the surface of several tumor cell lines including T and B-lymphomas, myeloid leukemias, melanomas, carcinomas and large T SV40 antigen-transformed cells (at protein level).

It is found in the cell membrane. Triggers NCR3-dependent natural killer cell activation. The chain is Natural cytotoxicity triggering receptor 3 ligand 1 (NCR3LG1) from Homo sapiens (Human).